The chain runs to 306 residues: Putative beta-lactamase HcpD (306 aa).

Residues 1–25 (MIKSWTKKWFLILFLMASCSSYLVA) form the signal peptide. TPR repeat units follow at residues 28-61 (GEKY…RVGV), 96-133 (HLAC…KGGV), 168-205 (GISC…KDGA), and 240-277 (GSGC…GFSG). 7 disulfide bridges follow: cysteine 55/cysteine 63, cysteine 91/cysteine 99, cysteine 127/cysteine 135, cysteine 163/cysteine 171, cysteine 199/cysteine 207, cysteine 235/cysteine 243, and cysteine 271/cysteine 279.

This sequence belongs to the hcp beta-lactamase family.

It localises to the secreted. It catalyses the reaction a beta-lactam + H2O = a substituted beta-amino acid. May hydrolyze 6-aminopenicillinic acid and 7-aminocephalosporanic acid (ACA) derivatives. Binds to penicillin. The protein is Putative beta-lactamase HcpD (hcpD) of Helicobacter pylori (strain ATCC 700392 / 26695) (Campylobacter pylori).